The primary structure comprises 86 residues: Envelope glycoprotein N (86 aa).

A signal peptide spans 1-29 (MTLYKIVSKPIILLAFFFTRVVFTNEVDG). Over 30–47 (EELFYKPTCHSDTYEIIL) the chain is Virion surface. Residues 48–68 (KKFSSIWILVNTFILLCSFSL) form a helical membrane-spanning segment. Residues 69-86 (FLKYWCFKTLAKETVKGY) are Intravirion-facing.

The protein belongs to the herpesviridae glycoprotein N family. Interacts (via N-terminus) with gM (via N-terminus). The gM-gN heterodimer forms the gCII complex.

Its subcellular location is the virion membrane. The protein localises to the host membrane. It localises to the host Golgi apparatus. The protein resides in the host trans-Golgi network. Its function is as follows. Envelope glycoprotein necessary for proper maturation of gM and modulation of its membrane fusion activity. Also plays a critical role in virion morphogenesis. The polypeptide is Envelope glycoprotein N (Homo sapiens (Human)).